A 1319-amino-acid polypeptide reads, in one-letter code: DNA (cytosine-5)-methyltransferase CMT2 (1319 aa).

Over residues 1–15 the composition is skewed to pro residues; sequence METPPPDPVSPPPPA. Disordered stretches follow at residues 1–34, 142–189, 265–302, and 442–468; these read METP…GGFS, ALDS…VASS, SAAS…KLPA, and KSRV…RART. Positions 266–279 are enriched in polar residues; the sequence is AASSMPLNQNGDSS. Residues 285 to 296 are compositionally biased toward basic and acidic residues; that stretch reads RVADSRKSRSSE. The region spanning 602 to 719 is the BAH domain; the sequence is YTFCIGECAF…IDYSTFSTIE (118 aa). Positions 758–1296 constitute an SAM-dependent MTase C5-type domain; the sequence is LSLLDLYCGC…YALAMAYLKK (539 aa). A Chromo domain is found at 863–928; it reads FEVWKLVDIC…EGHRQRILPR (66 aa). Residue cysteine 941 is part of the active site.

It localises to the nucleus. The catalysed reaction is a 2'-deoxycytidine in DNA + S-adenosyl-L-methionine = a 5-methyl-2'-deoxycytidine in DNA + S-adenosyl-L-homocysteine + H(+). Functionally, involved in CpXpG DNA methylation. The chain is DNA (cytosine-5)-methyltransferase CMT2 from Oryza sativa subsp. japonica (Rice).